The primary structure comprises 494 residues: Hepatic triacylglycerol lipase (494 aa).

The signal sequence occupies residues 1–21 (MGNHLQISVSLVLCIFIQSSA). An N-linked (GlcNAc...) asparagine glycan is attached at Asn-79. Ser-169 functions as the Nucleophile in the catalytic mechanism. The Charge relay system role is filled by Asp-195. Residues 255 to 278 (CHFLELYKHIAEHGLNAITQTINC) are essential for determining substrate specificity. Catalysis depends on His-280, which acts as the Charge relay system. Residues 353–487 (YHYQFKIQFI…HPTQEKVFVK (135 aa)) form the PLAT domain. A glycan (N-linked (GlcNAc...) asparagine) is linked at Asn-398.

Belongs to the AB hydrolase superfamily. Lipase family. In terms of assembly, homodimer.

The protein resides in the secreted. The catalysed reaction is a triacylglycerol + H2O = a diacylglycerol + a fatty acid + H(+). It catalyses the reaction a 1-acyl-sn-glycero-3-phosphocholine + H2O = sn-glycerol 3-phosphocholine + a fatty acid + H(+). It carries out the reaction a 1,2-diacyl-sn-glycero-3-phosphocholine + H2O = a 2-acyl-sn-glycero-3-phosphocholine + a fatty acid + H(+). The enzyme catalyses 1,2-di-(9Z-octadecenoyl)-sn-glycerol + H2O = 2-(9Z-octadecenoyl)-glycerol + (9Z)-octadecenoate + H(+). The catalysed reaction is 1,2,3-tri-(9Z-octadecenoyl)-glycerol + H2O = 2,3-di-(9Z)-octadecenoyl-sn-glycerol + (9Z)-octadecenoate + H(+). It catalyses the reaction 1-(9Z-octadecenoyl)-sn-glycero-3-phospho-L-serine + H2O = sn-glycero-3-phospho-L-serine + (9Z)-octadecenoate + H(+). It carries out the reaction 1-hexadecanoyl-sn-glycero-3-phosphocholine + H2O = sn-glycerol 3-phosphocholine + hexadecanoate + H(+). The enzyme catalyses 1,3-di-(9Z-octadecenoyl)-glycerol + H2O = 3-(9Z-octadecenoyl)-sn-glycerol + (9Z)-octadecenoate + H(+). The catalysed reaction is 1,2,3-tri-(9Z-octadecenoyl)-glycerol + H2O = di-(9Z)-octadecenoylglycerol + (9Z)-octadecenoate + H(+). It catalyses the reaction 1,2-di-(9Z-octadecenoyl)-sn-glycero-3-phosphocholine + H2O = (9Z-octadecenoyl)-sn-glycero-3-phosphocholine + (9Z)-octadecenoate + H(+). It carries out the reaction 1,2,3-tributanoylglycerol + H2O = dibutanoylglycerol + butanoate + H(+). The enzyme catalyses 1,2-dihexadecanoyl-sn-glycero-3-phosphocholine + H2O = hexadecanoyl-sn-glycero-3-phosphocholine + hexadecanoate + H(+). Its activity is regulated as follows. Phospholipase A1 and lysophospholipase activities are inhibited by annexin II. Functionally, catalyzes the hydrolysis of triglycerides and phospholipids present in circulating plasma lipoproteins, including chylomicrons, intermediate density lipoproteins (IDL), low density lipoproteins (LDL) of large size and high density lipoproteins (HDL), releasing free fatty acids (FFA) and smaller lipoprotein particles. Also exhibits lysophospholipase activity. Can hydrolyze both neutral lipid and phospholipid substrates but shows a greater binding affinity for neutral lipid substrates than phospholipid substrates. In native LDL, preferentially hydrolyzes the phosphatidylcholine species containing polyunsaturated fatty acids at sn-2 position. The protein is Hepatic triacylglycerol lipase (Lipc) of Rattus norvegicus (Rat).